The sequence spans 321 residues: Sideroflexin-3 (321 aa).

M1 is subject to N-acetylmethionine. Transmembrane regions (helical) follow at residues 146 to 164 (LGMA…ALGL), 174 to 194 (LVGR…NIPL), 226 to 246 (FQVV…PPVI), and 266 to 286 (LQMG…CALF).

This sequence belongs to the sideroflexin family.

The protein resides in the mitochondrion membrane. It catalyses the reaction L-serine(in) = L-serine(out). In terms of biological role, mitochondrial serine transporter that mediates transport of serine into mitochondria, an important step of the one-carbon metabolism pathway. Mitochondrial serine is converted to glycine and formate, which then exits to the cytosol where it is used to generate the charged folates that serve as one-carbon donors. The sequence is that of Sideroflexin-3 (SFXN3) from Bos taurus (Bovine).